A 151-amino-acid chain; its full sequence is NADH dehydrogenase [ubiquinone] 1 beta subcomplex subunit 11, mitochondrial (151 aa).

Residues 1–29 (MAARLLSLYGRCLSAAGAMRGLPAARVRW) constitute a mitochondrion transit peptide. The disordered stretch occupies residues 40-62 (GVEKKRQREPTMQWQEDPEPEDE). Residues 87-107 (AVFFFGFSIVLVFGTTFVAYV) form a helical membrane-spanning segment.

Belongs to the complex I NDUFB11 subunit family. In terms of assembly, complex I is composed of 45 different subunits. Interacts with BCAP31.

It is found in the mitochondrion inner membrane. Functionally, accessory subunit of the mitochondrial membrane respiratory chain NADH dehydrogenase (Complex I), that is believed not to be involved in catalysis. Complex I functions in the transfer of electrons from NADH to the respiratory chain. The immediate electron acceptor for the enzyme is believed to be ubiquinone. The chain is NADH dehydrogenase [ubiquinone] 1 beta subcomplex subunit 11, mitochondrial (Ndufb11) from Mus musculus (Mouse).